The chain runs to 300 residues: N-carbamoylputrescine amidase (300 aa).

The 259-residue stretch at 8-266 (VTVAALQFAC…EAVLVAQFDL (259 aa)) folds into the CN hydrolase domain. Glu-47 (proton acceptor) is an active-site residue. The active-site Proton donor is the Lys-120. The active-site Nucleophile is Cys-157.

It belongs to the carbon-nitrogen hydrolase superfamily. In terms of assembly, homooctamer.

The enzyme catalyses N-carbamoylputrescine + H2O + 2 H(+) = putrescine + NH4(+) + CO2. It functions in the pathway amine and polyamine biosynthesis; putrescine biosynthesis via agmatine pathway; putrescine from N-carbamoylputrescine (amidase route): step 1/1. Involved in polyamine biosynthesis. In Solanum lycopersicum (Tomato), this protein is N-carbamoylputrescine amidase (CPA).